Consider the following 504-residue polypeptide: L-carnitine/gamma-butyrobetaine antiporter (504 aa).

The next 12 helical transmembrane spans lie at 10–30 (IEPK…WLTV), 51–71 (WGWA…WLVF), 92–112 (IFMM…SIEI), 143–163 (GPLP…FFFV), 195–215 (FYLV…TPLV), 231–251 (LDAI…ACGL), 263–283 (SYLS…SFIM), 316–336 (WTVF…IFLA), 347–367 (LCFG…TVLG), 398–418 (WAAL…CFIA), 446–466 (LLVR…LLAL), and 475–495 (AIIA…LSFI).

The protein belongs to the BCCT transporter (TC 2.A.15) family. CaiT subfamily. Homotrimer.

Its subcellular location is the cell inner membrane. It catalyses the reaction 4-(trimethylamino)butanoate(in) + (R)-carnitine(out) = 4-(trimethylamino)butanoate(out) + (R)-carnitine(in). Its pathway is amine and polyamine metabolism; carnitine metabolism. Functionally, catalyzes the exchange of L-carnitine for gamma-butyrobetaine. The chain is L-carnitine/gamma-butyrobetaine antiporter from Escherichia coli (strain ATCC 8739 / DSM 1576 / NBRC 3972 / NCIMB 8545 / WDCM 00012 / Crooks).